The sequence spans 366 residues: Spermidine/putrescine import ATP-binding protein PotA (366 aa).

Residues 8–239 (IRFENVTKQF…PINKFVADFI (232 aa)) form the ABC transporter domain. Residue 41-48 (GPSGCGKT) coordinates ATP.

The protein belongs to the ABC transporter superfamily. Spermidine/putrescine importer (TC 3.A.1.11.1) family. The complex is composed of two ATP-binding proteins (PotA), two transmembrane proteins (PotB and PotC) and a solute-binding protein (PotD).

It is found in the cell membrane. The enzyme catalyses ATP + H2O + polyamine-[polyamine-binding protein]Side 1 = ADP + phosphate + polyamineSide 2 + [polyamine-binding protein]Side 1.. In terms of biological role, part of the ABC transporter complex PotABCD involved in spermidine/putrescine import. Responsible for energy coupling to the transport system. This chain is Spermidine/putrescine import ATP-binding protein PotA, found in Listeria monocytogenes serovar 1/2a (strain ATCC BAA-679 / EGD-e).